Consider the following 502-residue polypeptide: Probable cytosol aminopeptidase (502 aa).

Lys-267 and Asp-272 together coordinate Mn(2+). The active site involves Lys-279. Mn(2+) is bound by residues Asp-290, Asp-349, and Glu-351. Arg-353 is an active-site residue.

The protein belongs to the peptidase M17 family. Requires Mn(2+) as cofactor.

The protein resides in the cytoplasm. The catalysed reaction is Release of an N-terminal amino acid, Xaa-|-Yaa-, in which Xaa is preferably Leu, but may be other amino acids including Pro although not Arg or Lys, and Yaa may be Pro. Amino acid amides and methyl esters are also readily hydrolyzed, but rates on arylamides are exceedingly low.. It carries out the reaction Release of an N-terminal amino acid, preferentially leucine, but not glutamic or aspartic acids.. In terms of biological role, presumably involved in the processing and regular turnover of intracellular proteins. Catalyzes the removal of unsubstituted N-terminal amino acids from various peptides. The protein is Probable cytosol aminopeptidase of Aeromonas hydrophila subsp. hydrophila (strain ATCC 7966 / DSM 30187 / BCRC 13018 / CCUG 14551 / JCM 1027 / KCTC 2358 / NCIMB 9240 / NCTC 8049).